The chain runs to 281 residues: NADPH-dependent 7-cyano-7-deazaguanine reductase (281 aa).

Substrate is bound at residue 89–91; sequence VES. NADPH is bound at residue 91–92; sequence SK. Cysteine 188 (thioimide intermediate) is an active-site residue. Residue aspartate 195 is the Proton donor of the active site. 227–228 lines the substrate pocket; that stretch reads HE. 256–257 contributes to the NADPH binding site; it reads RG.

Belongs to the GTP cyclohydrolase I family. QueF type 2 subfamily. Homodimer.

It localises to the cytoplasm. It carries out the reaction 7-aminomethyl-7-carbaguanine + 2 NADP(+) = 7-cyano-7-deazaguanine + 2 NADPH + 3 H(+). The protein operates within tRNA modification; tRNA-queuosine biosynthesis. Its function is as follows. Catalyzes the NADPH-dependent reduction of 7-cyano-7-deazaguanine (preQ0) to 7-aminomethyl-7-deazaguanine (preQ1). This Azoarcus sp. (strain BH72) protein is NADPH-dependent 7-cyano-7-deazaguanine reductase.